A 929-amino-acid chain; its full sequence is MTDYSKTVNLLESPFPMRGNLAKCEPAWLKSWYEQKRYQKLREIAKGRPKFILHDGPPYANGDIHIGHAVNKILKDIIIRSKTQAGFDAPYVPGWDCHGLPIEVMVEKLHGKDMPKARFRELCREYAAEQIARQKKDFIRLGVLGDWDNPYLTMDFKTEADTVRMLGEIYKSGYLYRGAKPVQFCLDCGSSLAEAEVEYKDKVSPAIDVAYPFKDTVALAAAFGLAGIEGKAFAVIWTTTPWTLPASQAVSAGADVVYQLIDTPKGKLVLAKDLAEGALKRYGFSDGIAILAETTGDKLENLHMNHPFLERDIPMLNGEHVTTDAGTGLVHTAPAHGLEDYAVCNKYGIELYNPVNAEGKYISETPRVAGMSVWEANPVILQWPEETGNLLASSKIEHSYAHCWRHKTPLIYRATGQWFVGMDKAGSDGKTLRDKAIKAVDDTEFFPPWGRARLESMIEGRPDWVVSRQRYWGTPMTFFVHKETGELHPNSAELLEKVAQRIEEKGIEAWFSLDKSELLSAEDCEHYDKLPDTMDVWFDSGSTHYSVVKQREELEWPADLYLEGSDQHRGWFQSSMLTGCASSMGRAPYKQLLTHGFVVDQNGRKMSKSIGNVVAPQEVYNEFGADILRLWAASTDYSGELAISKEILKRVTESYRRIRNTLSFLFANLSDFNPIEDAVPQAEMVEIDRYALVLARRLQERLAGGYYPRYAFHFAVKDIVSFCSEDLGAFYLDILKDRLYTTKADSRARRSAQTALYHITRSLVLLIAPILCFTGEEAWDIIGGGEEDSVLFHTWHEFPAINEKAEAELVKKWTAIREAREAVTAAIEPLRADKTVGSSLQAEAEITAPEEMAGYLNALGEELRFALLVSKAEVKVGDELAVAAKASDGEKCERCWHYTRDVGAVAGYETVCKRCAENVGGEGETRHYA.

The short motif at 58–68 is the 'HIGH' region element; it reads PYANGDIHIGH. Glutamate 563 serves as a coordination point for L-isoleucyl-5'-AMP. Positions 605–609 match the 'KMSKS' region motif; it reads KMSKS. Lysine 608 serves as a coordination point for ATP. 4 residues coordinate Zn(2+): cysteine 892, cysteine 895, cysteine 912, and cysteine 915.

It belongs to the class-I aminoacyl-tRNA synthetase family. IleS type 1 subfamily. Monomer. Requires Zn(2+) as cofactor.

Its subcellular location is the cytoplasm. The catalysed reaction is tRNA(Ile) + L-isoleucine + ATP = L-isoleucyl-tRNA(Ile) + AMP + diphosphate. In terms of biological role, catalyzes the attachment of isoleucine to tRNA(Ile). As IleRS can inadvertently accommodate and process structurally similar amino acids such as valine, to avoid such errors it has two additional distinct tRNA(Ile)-dependent editing activities. One activity is designated as 'pretransfer' editing and involves the hydrolysis of activated Val-AMP. The other activity is designated 'posttransfer' editing and involves deacylation of mischarged Val-tRNA(Ile). The protein is Isoleucine--tRNA ligase of Neisseria gonorrhoeae (strain NCCP11945).